We begin with the raw amino-acid sequence, 296 residues long: Probable 6-phosphogluconolactonase 1 (296 aa).

It belongs to the glucosamine/galactosamine-6-phosphate isomerase family. 6-phosphogluconolactonase subfamily.

The enzyme catalyses 6-phospho-D-glucono-1,5-lactone + H2O = 6-phospho-D-gluconate + H(+). Its pathway is carbohydrate degradation; pentose phosphate pathway; D-ribulose 5-phosphate from D-glucose 6-phosphate (oxidative stage): step 2/3. Hydrolysis of 6-phosphogluconolactone to 6-phosphogluconate. This chain is Probable 6-phosphogluconolactonase 1, found in Oryza sativa subsp. japonica (Rice).